The following is a 155-amino-acid chain: Small ribosomal subunit protein uS9 (155 aa).

The protein belongs to the universal ribosomal protein uS9 family.

This chain is Small ribosomal subunit protein uS9, found in Rhizobium johnstonii (strain DSM 114642 / LMG 32736 / 3841) (Rhizobium leguminosarum bv. viciae).